Here is a 216-residue protein sequence, read N- to C-terminus: Small ribosomal subunit protein uS2 (216 aa).

This sequence belongs to the universal ribosomal protein uS2 family.

The sequence is that of Small ribosomal subunit protein uS2 from Carsonella ruddii (strain PV).